Consider the following 783-residue polypeptide: Endonuclease MutS2 (783 aa).

333–340 contacts ATP; it reads GPNTGGKT. Positions 708–783 constitute a Smr domain; sequence IDLRGKNIEE…GLGATFIYLK (76 aa).

This sequence belongs to the DNA mismatch repair MutS family. MutS2 subfamily. As to quaternary structure, homodimer. Binds to stalled ribosomes, contacting rRNA.

Its function is as follows. Endonuclease that is involved in the suppression of homologous recombination and thus may have a key role in the control of bacterial genetic diversity. In terms of biological role, acts as a ribosome collision sensor, splitting the ribosome into its 2 subunits. Detects stalled/collided 70S ribosomes which it binds and splits by an ATP-hydrolysis driven conformational change. Acts upstream of the ribosome quality control system (RQC), a ribosome-associated complex that mediates the extraction of incompletely synthesized nascent chains from stalled ribosomes and their subsequent degradation. Probably generates substrates for RQC. This is Endonuclease MutS2 from Finegoldia magna (strain ATCC 29328 / DSM 20472 / WAL 2508) (Peptostreptococcus magnus).